The following is a 214-amino-acid chain: Large ribosomal subunit protein uL1 (214 aa).

Belongs to the universal ribosomal protein uL1 family. Part of the 50S ribosomal subunit.

Functionally, binds directly to 23S rRNA. Probably involved in E site tRNA release. Protein L1 is also a translational repressor protein, it controls the translation of its operon by binding to its mRNA. The protein is Large ribosomal subunit protein uL1 of Methanopyrus kandleri (strain AV19 / DSM 6324 / JCM 9639 / NBRC 100938).